The chain runs to 579 residues: Isocitrate dehydrogenase kinase/phosphatase (579 aa).

ATP contacts are provided by residues 324 to 330 (ADGTPGM) and Lys-345. Residue Asp-380 is part of the active site.

It belongs to the AceK family.

It is found in the cytoplasm. The enzyme catalyses L-seryl-[isocitrate dehydrogenase] + ATP = O-phospho-L-seryl-[isocitrate dehydrogenase] + ADP + H(+). Its function is as follows. Bifunctional enzyme which can phosphorylate or dephosphorylate isocitrate dehydrogenase (IDH) on a specific serine residue. This is a regulatory mechanism which enables bacteria to bypass the Krebs cycle via the glyoxylate shunt in response to the source of carbon. When bacteria are grown on glucose, IDH is fully active and unphosphorylated, but when grown on acetate or ethanol, the activity of IDH declines drastically concomitant with its phosphorylation. The protein is Isocitrate dehydrogenase kinase/phosphatase of Xanthomonas axonopodis pv. citri (strain 306).